A 107-amino-acid chain; its full sequence is Sperm-specific class P protein 34 (107 aa).

The disordered stretch occupies residues 1–26; sequence MINVDPPTGNYPATGGNSTHNITSES. The MSP domain occupies 1–107; the sequence is MINVDPPTGN…GEIIVKLIAA (107 aa). Residues 15–25 are compositionally biased toward polar residues; that stretch reads GGNSTHNITSE.

In terms of tissue distribution, expressed at higher level in testis.

The sequence is that of Sperm-specific class P protein 34 (ssp-34) from Caenorhabditis elegans.